The primary structure comprises 479 residues: B-cell CLL/lymphoma 6 member B protein (479 aa).

The 68-residue stretch at 38–105 (TDVTLLVGGQ…MYTSRLRLSP (68 aa)) folds into the BTB domain. Disordered stretches follow at residues 143-190 (RPLE…PDPK) and 210-259 (GSLV…LSPT). Residues 147–160 (AEPPTPPTAPPPGS) show a composition bias toward pro residues. Basic and acidic residues predominate over residues 162–172 (RRSEGHPDPPT). The span at 234–244 (SSSSSSSSSSS) shows a compositional bias: low complexity. 5 consecutive C2H2-type zinc fingers follow at residues 328–350 (YKCQLCRSSFRYKGNLASHRTVH), 356–378 (YHCSICGARFNRPANLKTHSRIH), 384–406 (YKCETCGSRFVQVAHLRAHVLIH), 412–434 (YPCPTCGTRFRHLQTLKSHVRIH), and 440–463 (YHCDPCGLHFRHKSQLRLHLRQKH).

As to quaternary structure, associates with BCL6 through the BTB domain. Ubiquitously expressed with higher expression found in heart and placenta.

It is found in the nucleus. In terms of biological role, acts as a sequence-specific transcriptional repressor in association with BCL6. May function in a narrow stage or be related to some events in the early B-cell development. The chain is B-cell CLL/lymphoma 6 member B protein (BCL6B) from Homo sapiens (Human).